A 140-amino-acid polypeptide reads, in one-letter code: Nucleoside diphosphate kinase (140 aa).

The ATP site is built by Lys11, Phe59, Arg87, Thr93, Arg104, and Asn114. His117 functions as the Pros-phosphohistidine intermediate in the catalytic mechanism.

Belongs to the NDK family. Homotetramer. Mg(2+) serves as cofactor.

The protein resides in the cytoplasm. It carries out the reaction a 2'-deoxyribonucleoside 5'-diphosphate + ATP = a 2'-deoxyribonucleoside 5'-triphosphate + ADP. It catalyses the reaction a ribonucleoside 5'-diphosphate + ATP = a ribonucleoside 5'-triphosphate + ADP. In terms of biological role, major role in the synthesis of nucleoside triphosphates other than ATP. The ATP gamma phosphate is transferred to the NDP beta phosphate via a ping-pong mechanism, using a phosphorylated active-site intermediate. This Ruegeria pomeroyi (strain ATCC 700808 / DSM 15171 / DSS-3) (Silicibacter pomeroyi) protein is Nucleoside diphosphate kinase.